A 914-amino-acid chain; its full sequence is UPF0182 protein Syncc9605_1323 (914 aa).

Transmembrane regions (helical) follow at residues 4–24 (LLLL…WLWF), 37–57 (WLLQ…ARAW), 81–101 (IALL…LDLL), 123–143 (RIGS…MTWL), 152–172 (IVAA…SLAL), 195–215 (FAGL…TLVF), 240–260 (MRLI…LVWL), 285–305 (LPLR…LLLP), and 312–332 (QFLA…TPLT).

It belongs to the UPF0182 family.

The protein resides in the cell membrane. This chain is UPF0182 protein Syncc9605_1323, found in Synechococcus sp. (strain CC9605).